The chain runs to 126 residues: uncharacterized protein (126 aa).

This is an uncharacterized protein from Salmonella typhi.